The sequence spans 449 residues: UDP-N-acetylmuramoyl-tripeptide--D-alanyl-D-alanine ligase (449 aa).

Position 106 to 112 (106 to 112 (GSVGKTS)) interacts with ATP.

This sequence belongs to the MurCDEF family. MurF subfamily.

The protein localises to the cytoplasm. The catalysed reaction is D-alanyl-D-alanine + UDP-N-acetyl-alpha-D-muramoyl-L-alanyl-gamma-D-glutamyl-meso-2,6-diaminopimelate + ATP = UDP-N-acetyl-alpha-D-muramoyl-L-alanyl-gamma-D-glutamyl-meso-2,6-diaminopimeloyl-D-alanyl-D-alanine + ADP + phosphate + H(+). The protein operates within cell wall biogenesis; peptidoglycan biosynthesis. Its function is as follows. Involved in cell wall formation. Catalyzes the final step in the synthesis of UDP-N-acetylmuramoyl-pentapeptide, the precursor of murein. This is UDP-N-acetylmuramoyl-tripeptide--D-alanyl-D-alanine ligase from Rickettsia prowazekii (strain Madrid E).